Consider the following 723-residue polypeptide: Probable inactive serine/threonine-protein kinase fnkD (723 aa).

Residues 33–276 (WEIITQLESN…TTSLPKYSTL (244 aa)) enclose the Protein kinase domain. FNIP repeat units follow at residues 301-342 (FNQP…ELAS), 343-384 (FNQT…LLSS), 385-426 (FNQP…SLAS), 524-565 (FNQS…ILPS), 566-606 (FNHP…LGDE), and 647-690 (FNIE…FGIT).

It belongs to the protein kinase superfamily. STE Ser/Thr protein kinase family.

This is Probable inactive serine/threonine-protein kinase fnkD (fnkD-1) from Dictyostelium discoideum (Social amoeba).